Consider the following 463-residue polypeptide: uncharacterized protein (463 aa).

One can recognise an HTH gntR-type domain in the interval 13 to 81; it reads IPLYQQLYRY…PRSGWFADYH (69 aa). Residues 41–60 constitute a DNA-binding region (H-T-H motif); it reads KRLLANQLSISQTTVERAYE. Lys308 is subject to N6-(pyridoxal phosphate)lysine.

This sequence in the C-terminal section; belongs to the class-I pyridoxal-phosphate-dependent aminotransferase family. The cofactor is pyridoxal 5'-phosphate.

This is an uncharacterized protein from Bacillus subtilis (strain 168).